The chain runs to 66 residues: Large ribosomal subunit protein bL31 (66 aa).

4 residues coordinate Zn(2+): C16, C18, C36, and C39.

Belongs to the bacterial ribosomal protein bL31 family. Type A subfamily. In terms of assembly, part of the 50S ribosomal subunit. Requires Zn(2+) as cofactor.

Functionally, binds the 23S rRNA. The polypeptide is Large ribosomal subunit protein bL31 (Campylobacter jejuni subsp. jejuni serotype O:6 (strain 81116 / NCTC 11828)).